The primary structure comprises 441 residues: Damage-control phosphatase ARMT1 (441 aa).

Residue Ala-2 is modified to N-acetylalanine. Lys-40 is modified (N6-acetyllysine). Residue Ser-102 is modified to Phosphoserine. The Mn(2+) site is built by Asp-253 and Asn-254. 253–254 (DN) provides a ligand contact to substrate. S-adenosyl-L-methionine-binding residues include Glu-258 and Asp-291. Asp-291 contacts Mn(2+). Substrate contacts are provided by residues 367-371 (DLNYR) and Lys-404. The Subfamily III RTxK motif signature appears at 401 to 404 (RTLK).

It belongs to the damage-control phosphatase family. Sugar phosphate phosphatase III subfamily. Requires Mn(2+) as cofactor. The cofactor is Ni(2+). Post-translationally, automethylated.

The catalysed reaction is beta-D-fructose 1-phosphate + H2O = D-fructose + phosphate. The enzyme catalyses beta-D-fructose 6-phosphate = dihydroxyacetone + D-glyceraldehyde 3-phosphate. It catalyses the reaction L-glutamyl-[protein] + S-adenosyl-L-methionine = [protein]-L-glutamate 5-O-methyl ester + S-adenosyl-L-homocysteine. Functionally, metal-dependent phosphatase that shows phosphatase activity against several substrates, including fructose-1-phosphate and fructose-6-phosphate. Its preference for fructose-1-phosphate, a strong glycating agent that causes DNA damage rather than a canonical yeast metabolite, suggests a damage-control function in hexose phosphate metabolism. Has also been shown to have O-methyltransferase activity that methylates glutamate residues of target proteins to form gamma-glutamyl methyl ester residues. Possibly methylates PCNA, suggesting it is involved in the DNA damage response. The chain is Damage-control phosphatase ARMT1 from Bos taurus (Bovine).